The primary structure comprises 34 residues: Putative protein YmiB (34 aa).

Residues 7-24 (TAAKRIVFFIYLFVIQFW) form a helical membrane-spanning segment.

The protein localises to the membrane. The polypeptide is Putative protein YmiB (ymiB) (Escherichia coli (strain K12)).